The primary structure comprises 306 residues: UDP-N-acetylenolpyruvoylglucosamine reductase (306 aa).

In terms of domain architecture, FAD-binding PCMH-type spans 34–199; sequence RVGGPAQLLF…TSVRLRGAIA (166 aa). Residue Arg-179 is part of the active site. Ser-228 functions as the Proton donor in the catalytic mechanism. Glu-298 is an active-site residue.

This sequence belongs to the MurB family. The cofactor is FAD.

It localises to the cytoplasm. It catalyses the reaction UDP-N-acetyl-alpha-D-muramate + NADP(+) = UDP-N-acetyl-3-O-(1-carboxyvinyl)-alpha-D-glucosamine + NADPH + H(+). Its pathway is cell wall biogenesis; peptidoglycan biosynthesis. Cell wall formation. In Rhodopseudomonas palustris (strain BisA53), this protein is UDP-N-acetylenolpyruvoylglucosamine reductase.